The chain runs to 262 residues: Probable dihydroorotate dehydrogenase B (NAD(+)), electron transfer subunit (262 aa).

In terms of domain architecture, FAD-binding FR-type spans 4–97 (VKPIPAEVVE…RGPYGKPFEV (94 aa)). [2Fe-2S] cluster is bound by residues cysteine 217, cysteine 222, cysteine 225, and cysteine 234.

It belongs to the PyrK family. As to quaternary structure, heterotetramer of 2 PyrK and 2 PyrD type B subunits. [2Fe-2S] cluster is required as a cofactor. The cofactor is FAD.

It functions in the pathway pyrimidine metabolism; UMP biosynthesis via de novo pathway; orotate from (S)-dihydroorotate (NAD(+) route): step 1/1. Functionally, responsible for channeling the electrons from the oxidation of dihydroorotate from the FMN redox center in the PyrD type B subunit to the ultimate electron acceptor NAD(+). In Methanopyrus kandleri (strain AV19 / DSM 6324 / JCM 9639 / NBRC 100938), this protein is Probable dihydroorotate dehydrogenase B (NAD(+)), electron transfer subunit.